Consider the following 308-residue polypeptide: Mitochondrial import receptor subunit TOM40B (308 aa).

The interval 281–308 (PLPVTLALGAFLNHWRNRFHCGFSITVG) is required for mitochondrial targeting.

It belongs to the Tom40 family. In terms of assembly, forms part of the preprotein translocase of the outer mitochondrial membrane (TOM complex) containing TOMM22, TOMM40, TOMM40L and TOMM70. Interacts with mitochondrial targeting sequences. As to expression, widely expressed. Higher levels in heart, brain and liver, very low level in testis.

It is found in the mitochondrion outer membrane. Potential channel-forming protein implicated in import of protein precursors into mitochondria. The polypeptide is Mitochondrial import receptor subunit TOM40B (Rattus norvegicus (Rat)).